Here is an 816-residue protein sequence, read N- to C-terminus: Nicotine 6-hydroxylase large subunit (816 aa).

E745 is a binding site for Mo-molybdopterin cytosine dinucleotide.

This sequence belongs to the xanthine dehydrogenase family. Heterotrimer composed of a large subunit (NdhL), a medium subunit (NdhM) and a small subunit (NdhS). Mo-molybdopterin cytosine dinucleotide is required as a cofactor.

It localises to the cytoplasm. The enzyme catalyses (R)-nicotine + A + H2O = (R)-6-hydroxynicotine + AH2. It carries out the reaction (S)-nicotine + A + H2O = (S)-6-hydroxynicotine + AH2. It participates in alkaloid degradation; nicotine degradation; 6-hydroxypseudooxynicotine from nicotine (R-isomer route): step 1/2. Its pathway is alkaloid degradation; nicotine degradation; 6-hydroxypseudooxynicotine from nicotine (S-isomer route): step 1/2. Nicotine dehydrogenase activity is inhibited by tungsten. Its function is as follows. Component of the nicotine 6-hydroxylase, which is involved in the degradation of nicotine. Catalyzes the hydroxylation of the pyridine ring at C6 to form 6-hydroxynicotine. Can use both L-nicotine and D-nicotine. This Paenarthrobacter nicotinovorans (Arthrobacter nicotinovorans) protein is Nicotine 6-hydroxylase large subunit.